A 65-amino-acid polypeptide reads, in one-letter code: MPKMKTSRAAAKRFKVTGTGKLKRNKAYKRHILTKKTTKTKRNLRKATMTDETNVKNMKKILPYM.

Belongs to the bacterial ribosomal protein bL35 family.

The polypeptide is Large ribosomal subunit protein bL35 (Agathobacter rectalis (strain ATCC 33656 / DSM 3377 / JCM 17463 / KCTC 5835 / VPI 0990) (Eubacterium rectale)).